The sequence spans 125 residues: Small ribosomal subunit protein uS11 (125 aa).

This sequence belongs to the universal ribosomal protein uS11 family. In terms of assembly, part of the 30S ribosomal subunit. Interacts with proteins S7 and S18. Binds to IF-3.

Its function is as follows. Located on the platform of the 30S subunit, it bridges several disparate RNA helices of the 16S rRNA. Forms part of the Shine-Dalgarno cleft in the 70S ribosome. This is Small ribosomal subunit protein uS11 from Coprothermobacter proteolyticus (strain ATCC 35245 / DSM 5265 / OCM 4 / BT).